A 340-amino-acid polypeptide reads, in one-letter code: 4-hydroxy-2-oxovalerate aldolase (340 aa).

The region spanning 8–260 (VILHDMSLRD…HHGVNLYDIM (253 aa)) is the Pyruvate carboxyltransferase domain. 16–17 (RD) lines the substrate pocket. Residue D17 coordinates Mn(2+). H20 serves as the catalytic Proton acceptor. Residues S170 and H199 each coordinate substrate. Mn(2+) contacts are provided by H199 and H201. Residue Y290 coordinates substrate.

This sequence belongs to the 4-hydroxy-2-oxovalerate aldolase family.

It carries out the reaction (S)-4-hydroxy-2-oxopentanoate = acetaldehyde + pyruvate. This is 4-hydroxy-2-oxovalerate aldolase from Shewanella halifaxensis (strain HAW-EB4).